The sequence spans 1391 residues: DNA-directed RNA polymerase subunit beta' (1391 aa).

The Zn(2+) site is built by Cys-72, Cys-74, Cys-87, and Cys-90. Mg(2+) is bound by residues Asp-462, Asp-464, and Asp-466. Residues Cys-816, Cys-890, Cys-897, and Cys-900 each contribute to the Zn(2+) site.

This sequence belongs to the RNA polymerase beta' chain family. The RNAP catalytic core consists of 2 alpha, 1 beta, 1 beta' and 1 omega subunit. When a sigma factor is associated with the core the holoenzyme is formed, which can initiate transcription. Mg(2+) is required as a cofactor. The cofactor is Zn(2+).

The enzyme catalyses RNA(n) + a ribonucleoside 5'-triphosphate = RNA(n+1) + diphosphate. Functionally, DNA-dependent RNA polymerase catalyzes the transcription of DNA into RNA using the four ribonucleoside triphosphates as substrates. In Neisseria meningitidis serogroup B (strain ATCC BAA-335 / MC58), this protein is DNA-directed RNA polymerase subunit beta'.